Consider the following 143-residue polypeptide: Monothiol glutaredoxin-5, mitochondrial (143 aa).

Residues 1-28 (MFGRISTRALLRPAFTHRIPSVSLSRFL) constitute a mitochondrion transit peptide. One can recognise a Glutaredoxin domain in the interval 33–138 (KQAIESAIES…KLLEDADALV (106 aa)). K50 is a glutathione binding site. Position 58 (C58) interacts with [2Fe-2S] cluster. Glutathione is bound by residues 90–94 (REGVK), I102, and 115–116 (CD).

This sequence belongs to the glutaredoxin family. Monothiol subfamily. In terms of assembly, homodimer.

Its subcellular location is the mitochondrion matrix. Monothiol glutaredoxin involved in mitochondrial iron-sulfur (Fe/S) cluster transfer. Receives iron-sulfur clusters from scaffold protein ISU1 and mediates their transfer to apoproteins, to the 4Fe/FS cluster biosynthesis machinery, or export from mitochondrion. The polypeptide is Monothiol glutaredoxin-5, mitochondrial (GRX5) (Lachancea kluyveri (Yeast)).